The sequence spans 159 residues: Small ribosomal subunit protein uS9 (159 aa).

The protein belongs to the universal ribosomal protein uS9 family.

The sequence is that of Small ribosomal subunit protein uS9 from Rickettsia africae (strain ESF-5).